The following is a 312-amino-acid chain: Olfactory receptor 51B2 (312 aa).

Residues 1–23 are Extracellular-facing; that stretch reads MWPNITAAPFLLTGFPGLEAAHH. N-linked (GlcNAc...) asparagine glycosylation is present at N4. Residues 24-44 traverse the membrane as a helical segment; it reads WISIPFFAVYVCILLGNGMLL. Residues 45 to 52 lie on the Cytoplasmic side of the membrane; that stretch reads YLIKHDHS. The helical transmembrane segment at 53–73 threads the bilayer; sequence LHEPMYYFLTMLAGTDLMVTL. Residues 74 to 97 lie on the Extracellular side of the membrane; the sequence is TTMPTVMGILWVNHREISSVGCFL. A disulfide bridge links C95 with C187. A helical membrane pass occupies residues 98–118; sequence QAYFIHSLSVVESGSLLAMAY. Residues 119–137 lie on the Cytoplasmic side of the membrane; the sequence is DCFIAIRNPLRYASILTNT. The helical transmembrane segment at 138–158 threads the bilayer; sequence RVIALGVGVFLRGFVSILPVI. The Extracellular portion of the chain corresponds to 159–194; sequence LRLFSFSYCKSHVITRAFCLHQEIMRLACADITFNR. Residues 195–215 traverse the membrane as a helical segment; the sequence is LYPVILISLTIFLDCLIILFS. The Cytoplasmic segment spans residues 216-235; the sequence is YILILNTVIGIASGEERAKA. The helical transmembrane segment at 236 to 256 threads the bilayer; it reads LNTCISHISCVLIFYVTVMGL. The Extracellular segment spans residues 257 to 271; it reads TFIYRFGKNVPEVVH. The helical transmembrane segment at 272 to 292 threads the bilayer; sequence IIMSYIYFLFPPLMNPVIYSI. The Cytoplasmic portion of the chain corresponds to 293-312; the sequence is KTKQIQYGIIRLLSKHRFSS.

It belongs to the G-protein coupled receptor 1 family. Post-translationally, ubiquitinated by the CRL2(FEM1A) and CRL2(FEM1C) complexes, which recognize the -Lys-Xaa-Xaa-Arg C-degron at the C-terminus, leading to its degradation.

It localises to the cell membrane. Odorant receptor. In Homo sapiens (Human), this protein is Olfactory receptor 51B2 (OR51B2).